The chain runs to 131 residues: Small ribosomal subunit protein uS8 (131 aa).

This sequence belongs to the universal ribosomal protein uS8 family. Part of the 30S ribosomal subunit. Contacts proteins S5 and S12.

One of the primary rRNA binding proteins, it binds directly to 16S rRNA central domain where it helps coordinate assembly of the platform of the 30S subunit. This Dictyoglomus turgidum (strain DSM 6724 / Z-1310) protein is Small ribosomal subunit protein uS8.